Consider the following 1387-residue polypeptide: DNA-directed RNA polymerase subunit beta'' (1387 aa).

4 residues coordinate Zn(2+): cysteine 224, cysteine 295, cysteine 302, and cysteine 305. The interval serine 883 to aspartate 903 is disordered.

The protein belongs to the RNA polymerase beta' chain family. RpoC2 subfamily. In plastids the minimal PEP RNA polymerase catalytic core is composed of four subunits: alpha, beta, beta', and beta''. When a (nuclear-encoded) sigma factor is associated with the core the holoenzyme is formed, which can initiate transcription. Zn(2+) is required as a cofactor.

Its subcellular location is the plastid. It is found in the chloroplast. The catalysed reaction is RNA(n) + a ribonucleoside 5'-triphosphate = RNA(n+1) + diphosphate. Functionally, DNA-dependent RNA polymerase catalyzes the transcription of DNA into RNA using the four ribonucleoside triphosphates as substrates. This is DNA-directed RNA polymerase subunit beta'' from Platanus occidentalis (Sycamore).